We begin with the raw amino-acid sequence, 208 residues long: UPF0637 protein lp_2332 (208 aa).

It belongs to the UPF0637 family.

The polypeptide is UPF0637 protein lp_2332 (Lactiplantibacillus plantarum (strain ATCC BAA-793 / NCIMB 8826 / WCFS1) (Lactobacillus plantarum)).